A 1663-amino-acid chain; its full sequence is Cortactin-binding protein 2 (1663 aa).

Disordered stretches follow at residues Met-1–Ala-23, Lys-203–Glu-222, Arg-358–Gly-440, Gly-454–Arg-479, and Arg-498–Ser-616. The stretch at Lys-119–Lys-276 forms a coiled coil. The span at Pro-386–Ser-396 shows a compositional bias: low complexity. The span at Gln-411–Ala-422 shows a compositional bias: polar residues. Arg-498 carries the post-translational modification Asymmetric dimethylarginine. Residues Thr-583–Val-597 are compositionally biased toward polar residues. 6 ANK repeats span residues Gly-709–Tyr-739, Asp-743–Ala-772, Asn-776–His-805, Gly-809–Val-838, Asp-842–Gly-871, and Glu-912–Arg-942. Residues Lys-1447–Pro-1477 are disordered. A Phosphoserine modification is found at Ser-1524. 2 disordered regions span residues Gln-1581–Thr-1602 and Ser-1618–Lys-1663. Residues Lys-1582 to Lys-1599 show a composition bias toward polar residues. A compositionally biased stretch (low complexity) spans Ser-1624 to Gln-1638. Residues Ser-1645–Lys-1663 show a composition bias toward basic and acidic residues.

As to quaternary structure, interacts with CTTN/cortactin SH3 domain. Interacts with STRN, STRN4/zinedin and MOB4/phocein; this interactions mediate the association with the STRIPAK core complex and may regulate dendritic spine distribution of the STRIPAK complex in hippocampal neurons. Activation of glutamate receptors weakens the interaction with STRN and STRN4.

It localises to the cytoplasm. The protein localises to the cell cortex. The protein resides in the cell projection. It is found in the dendritic spine. Regulates the dendritic spine distribution of CTTN/cortactin in hippocampal neurons, and thus controls dendritic spinogenesis and dendritic spine maintenance. Associates with the striatin-interacting phosphatase and kinase (STRIPAK) core complex to regulate dendritic spine distribution of the STRIPAK complex in hippocampal neurons. In Papio anubis (Olive baboon), this protein is Cortactin-binding protein 2 (CTTNBP2).